A 99-amino-acid polypeptide reads, in one-letter code: Aspartyl/glutamyl-tRNA(Asn/Gln) amidotransferase subunit C (99 aa).

This sequence belongs to the GatC family. As to quaternary structure, heterotrimer of A, B and C subunits.

It carries out the reaction L-glutamyl-tRNA(Gln) + L-glutamine + ATP + H2O = L-glutaminyl-tRNA(Gln) + L-glutamate + ADP + phosphate + H(+). The enzyme catalyses L-aspartyl-tRNA(Asn) + L-glutamine + ATP + H2O = L-asparaginyl-tRNA(Asn) + L-glutamate + ADP + phosphate + 2 H(+). Allows the formation of correctly charged Asn-tRNA(Asn) or Gln-tRNA(Gln) through the transamidation of misacylated Asp-tRNA(Asn) or Glu-tRNA(Gln) in organisms which lack either or both of asparaginyl-tRNA or glutaminyl-tRNA synthetases. The reaction takes place in the presence of glutamine and ATP through an activated phospho-Asp-tRNA(Asn) or phospho-Glu-tRNA(Gln). The chain is Aspartyl/glutamyl-tRNA(Asn/Gln) amidotransferase subunit C from Mycobacterium leprae (strain Br4923).